The following is a 172-amino-acid chain: Small ribosomal subunit protein uS5 (172 aa).

Positions L11–V74 constitute an S5 DRBM domain.

Belongs to the universal ribosomal protein uS5 family. Part of the 30S ribosomal subunit. Contacts proteins S4 and S8.

Functionally, with S4 and S12 plays an important role in translational accuracy. Its function is as follows. Located at the back of the 30S subunit body where it stabilizes the conformation of the head with respect to the body. In Rickettsia canadensis (strain McKiel), this protein is Small ribosomal subunit protein uS5.